A 174-amino-acid chain; its full sequence is Protein CURVATURE THYLAKOID 1B, chloroplastic (174 aa).

A disordered region spans residues 1-20; that stretch reads MASLSVSSSSTIIDSRAPPS. A chloroplast-targeting transit peptide spans 1–63; the sequence is MASLSVSSSS…RKIVRNVVTR (63 aa). Ala64 is subject to N-acetylalanine. At 64–100 the chain is on the stromal side; sequence ATTEVGEAPATTTEAETTELPEIVKTAQEAWEKVDDK. The helical transmembrane segment at 101-121 threads the bilayer; sequence YAIGSLAFAGVVALWGSAGMI. At 122-126 the chain is on the lumenal side; the sequence is SAIDR. Residues 127 to 147 form a helical membrane-spanning segment; that stretch reads LPLVPGVLELVGIGYTGWFTY. Over 148–174 the chain is Stromal; sequence KNLVFKPDREALFEKVKSTYKDILGSS.

The protein belongs to the CURT family. As to quaternary structure, homo- and heterodimers and trimers. Interacts with PSAL. Phosphorylated on either Thr-65 or Thr-66 by a threonine specific thylakoid kinase.

It is found in the plastid. The protein resides in the chloroplast thylakoid membrane. Its function is as follows. Determines thylakoid architecture by inducing membrane curvature. The protein is Protein CURVATURE THYLAKOID 1B, chloroplastic (CURT1B) of Arabidopsis thaliana (Mouse-ear cress).